Reading from the N-terminus, the 300-residue chain is Very-long-chain enoyl-CoA reductase (300 aa).

A helical transmembrane segment spans residues 91–111 (SLVFICEYAGPLFVYPIFYFL). Asn163 is a glycosylation site (N-linked (GlcNAc...) asparagine). Residues 191–211 (VYLGLGLWIIGEVFNYICHIQ) form a helical membrane-spanning segment. Residue Asn238 is glycosylated (N-linked (GlcNAc...) asparagine). A helical membrane pass occupies residues 243-263 (ILSWIGFSILTQTLTSWIFAL).

The protein belongs to the steroid 5-alpha reductase family.

Its subcellular location is the endoplasmic reticulum membrane. The enzyme catalyses a very-long-chain 2,3-saturated fatty acyl-CoA + NADP(+) = a very-long-chain (2E)-enoyl-CoA + NADPH + H(+). Its pathway is lipid metabolism; fatty acid biosynthesis. In terms of biological role, catalyzes the last of the four reactions of the long-chain fatty acids elongation cycle. This endoplasmic reticulum-bound enzymatic process, allows the addition of 2 carbons to the chain of long- and very long-chain fatty acids/VLCFAs per cycle. This enzyme reduces the trans-2,3-enoyl-CoA fatty acid intermediate to an acyl-CoA that can be further elongated by entering a new cycle of elongation. Thereby, it participates in the production of VLCFAs of different chain lengths that are involved in multiple biological processes as precursors of membrane lipids and lipid mediators. The polypeptide is Very-long-chain enoyl-CoA reductase (gpsn2) (Dictyostelium discoideum (Social amoeba)).